We begin with the raw amino-acid sequence, 88 residues long: uncharacterized protein (88 aa).

Positions 1-31 (MIPRDPRSPAPDLSAINQPAGRAERRSGPAT) are disordered.

This is an uncharacterized protein from Escherichia coli.